A 493-amino-acid chain; its full sequence is Ribulose bisphosphate carboxylase large chain (493 aa).

Substrate-binding residues include Asn132 and Thr182. Lys184 acts as the Proton acceptor in catalysis. Lys186 serves as a coordination point for substrate. The Mg(2+) site is built by Lys210, Asp212, and Glu213. Lys210 bears the N6-carboxylysine mark. Catalysis depends on His302, which acts as the Proton acceptor. Positions 303, 335, and 387 each coordinate substrate.

Belongs to the RuBisCO large chain family. Type I subfamily. In terms of assembly, heterohexadecamer of 8 large chains and 8 small chains. Requires Mg(2+) as cofactor.

It carries out the reaction 2 (2R)-3-phosphoglycerate + 2 H(+) = D-ribulose 1,5-bisphosphate + CO2 + H2O. The enzyme catalyses D-ribulose 1,5-bisphosphate + O2 = 2-phosphoglycolate + (2R)-3-phosphoglycerate + 2 H(+). RuBisCO catalyzes two reactions: the carboxylation of D-ribulose 1,5-bisphosphate, the primary event in carbon dioxide fixation, as well as the oxidative fragmentation of the pentose substrate. Both reactions occur simultaneously and in competition at the same active site. The polypeptide is Ribulose bisphosphate carboxylase large chain (Acidiphilium cryptum (strain JF-5)).